A 62-amino-acid polypeptide reads, in one-letter code: MDMKKLIERINFLYKKSKEEGLTEEEKVEQQKLRREYIDIIKGNVKVQLEGVEKIPTANRKN.

It belongs to the UPF0291 family.

The protein resides in the cytoplasm. This chain is UPF0291 protein CLI_2672, found in Clostridium botulinum (strain Langeland / NCTC 10281 / Type F).